The chain runs to 262 residues: Alpha-tubulin N-acetyltransferase 1 (262 aa).

Residues 1 to 177 (MQVDADLRPI…TNFVVFEELF (177 aa)) enclose the N-acetyltransferase domain. 111–124 (FYVHFSCQRQGVGQ) contributes to the acetyl-CoA binding site.

Belongs to the acetyltransferase ATAT1 family. Expressed solely in touch receptor neurons.

The enzyme catalyses L-lysyl-[alpha-tubulin] + acetyl-CoA = N(6)-acetyl-L-lysyl-[alpha-tubulin] + CoA + H(+). In terms of biological role, specifically acetylates 'Lys-40' in alpha-tubulin/mec-12 on the lumenal side of microtubules. Promotes microtubule destabilization and accelerates microtubule dynamics; this activity may be independent of acetylation activity. Acetylates alpha-tubulin with a slow enzymatic rate, due to a catalytic site that is not optimized for acetyl transfer. Enters the microtubule through each end and diffuses quickly throughout the lumen of microtubules. Acetylates only long/old microtubules because of its slow acetylation rate since it does not have time to act on dynamically unstable microtubules before the enzyme is released. Required for the maintenance of touch receptor neurons and possibly other type of neurons involved in locomotion. Regulates the number and localization of mitochondria in mechanosensory neurons. Plays a role in axonal transport. The protein is Alpha-tubulin N-acetyltransferase 1 of Caenorhabditis elegans.